Consider the following 916-residue polypeptide: Protein translocase subunit SecA (916 aa).

Residues Q87, 105 to 109 (GEGKT), and D507 contribute to the ATP site. Residues C900, C902, C911, and H912 each coordinate Zn(2+).

The protein belongs to the SecA family. As to quaternary structure, monomer and homodimer. Part of the essential Sec protein translocation apparatus which comprises SecA, SecYEG and auxiliary proteins SecDF-YajC and YidC. Zn(2+) serves as cofactor.

Its subcellular location is the cell inner membrane. It is found in the cytoplasm. It carries out the reaction ATP + H2O + cellular proteinSide 1 = ADP + phosphate + cellular proteinSide 2.. Part of the Sec protein translocase complex. Interacts with the SecYEG preprotein conducting channel. Has a central role in coupling the hydrolysis of ATP to the transfer of proteins into and across the cell membrane, serving both as a receptor for the preprotein-SecB complex and as an ATP-driven molecular motor driving the stepwise translocation of polypeptide chains across the membrane. The chain is Protein translocase subunit SecA from Neisseria meningitidis serogroup B (strain ATCC BAA-335 / MC58).